The sequence spans 519 residues: Membrane-bound glycerophospholipid O-acyltransferase 2 (519 aa).

A run of 6 helical transmembrane segments spans residues 22–42, 61–81, 88–108, 184–204, 236–256, and 288–305; these read PIDQVNFVVCQLFALLAAVWF, TLLGLYLAFFCFGWYALHFLV, CIMIIAGVESMHQCCFVFALG, FMGILAGPLCSYKDYIAFIEG, LLVCGLSLLFHLTISSMLPVE, and YFAWTLADAINNAAGFGF. Active-site residues include N341 and H372. 3 consecutive transmembrane segments (helical) span residues 365 to 385, 415 to 435, and 443 to 463; these read FFLSAIWHGVYPGYYLTFLTG, IITWAATQITISYTVVPFVLL, and FYRSWYYCLHICSILVLLLLP.

Belongs to the membrane-bound acyltransferase family.

Its subcellular location is the endoplasmic reticulum membrane. The catalysed reaction is a 1-acyl-sn-glycero-3-phosphocholine + an acyl-CoA = a 1,2-diacyl-sn-glycero-3-phosphocholine + CoA. It carries out the reaction a 1-acyl-sn-glycero-3-phosphoethanolamine + an acyl-CoA = a 1,2-diacyl-sn-glycero-3-phosphoethanolamine + CoA. The enzyme catalyses a 1-acyl-sn-glycero-3-phosphate + an acyl-CoA = a 1,2-diacyl-sn-glycero-3-phosphate + CoA. It catalyses the reaction (9Z)-hexadecenoyl-CoA + 1-hexadecanoyl-sn-glycero-3-phosphocholine = 1-hexadecanoyl-2-(9Z-hexadecenoyl)-sn-glycero-3-phosphocholine + CoA. The catalysed reaction is 1-hexadecanoyl-sn-glycero-3-phosphoethanolamine + (9Z)-octadecenoyl-CoA = 1-hexadecanoyl-2-(9Z-octadecenoyl)-sn-glycero-3-phosphoethanolamine + CoA. It carries out the reaction 1-hexadecanoyl-sn-glycero-3-phosphoethanolamine + (9Z)-hexadecenoyl-CoA = 1-hexadecanoyl-2-(9Z)-hexadecenoyl-sn-glycero-3-phosphoethanolamine + CoA. The enzyme catalyses 1-(9Z-octadecenoyl)-sn-glycero-3-phospho-L-serine + hexadecanoyl-CoA = 1-(9Z)-octadecenoyl-2-hexadecanoyl-sn-glycero-3-phosphoserine + CoA. It catalyses the reaction (9Z,12Z)-octadecadienoyl-CoA + 1-hexadecanoyl-sn-glycero-3-phosphocholine = 1-hexadecanoyl-2-(9Z,12Z-octadecadienoyl)-sn-glycero-3-phosphocholine + CoA. The catalysed reaction is 1-hexadecanoyl-sn-glycero-3-phosphocholine + (9Z)-octadecenoyl-CoA = 1-hexadecanoyl-2-(9Z-octadecenoyl)-sn-glycero-3-phosphocholine + CoA. It carries out the reaction 1-hexadecanoyl-sn-glycero-3-phosphate + (9Z)-hexadecenoyl-CoA = 1-hexadecanoyl-2-[(9Z)-hexadec-9-enoyl]-sn-glycero-3-phosphate + CoA. The enzyme catalyses 1-hexadecanoyl-sn-glycero-3-phosphate + (9Z)-octadecenoyl-CoA = 1-hexadecanoyl-2-(9Z-octadecenoyl)-sn-glycero-3-phosphate + CoA. It catalyses the reaction a 1-O-(1Z-alkenyl)-sn-glycero-3-phosphocholine + (9Z)-octadecenoyl-CoA = 1-O-(1Z)-alkenyl-2-(9Z)-octadecenoyl-sn-glycero-3-phosphocholine + CoA. The catalysed reaction is a 1-O-(1Z-alkenyl)-sn-glycero-3-phosphoethanolamine + (9Z)-octadecenoyl-CoA = 1-O-(1Z)-alkenyl-2-(9Z)-octadecenoyl-sn-glycero-3-phosphoethanolamine + CoA. It carries out the reaction 1-octadecanoyl-sn-glycero-3-phosphoethanolamine + (9Z)-octadecenoyl-CoA = 1-octadecanoyl-2-(9Z-octadecenoyl)-sn-glycero-3-phosphoethanolamine + CoA. The enzyme catalyses 1-octadecanoyl-sn-glycero-3-phosphocholine + (9Z)-octadecenoyl-CoA = 1-octadecanoyl-2-(9Z-octadecenoyl)-sn-glycero-3-phosphocholine + CoA. It catalyses the reaction 1-(9Z-octadecenoyl)-sn-glycero-3-phosphoethanolamine + (9Z)-octadecenoyl-CoA = 1,2-di-(9Z-octadecenoyl)-sn-glycero-3-phosphoethanolamine + CoA. It functions in the pathway lipid metabolism; phospholipid metabolism. With respect to regulation, partially inhibited by thimerosal. Functionally, acyltransferase which catalyzes the transfer of an acyl group from an acyl-CoA to a lysophospholipid leading to the production of a phospholipid and participates in the reacylation step of the phospholipid remodeling pathway also known as the Lands cycle. May catalyze preferentially the acylation of lysophosphatidylethanolamine (1-acyl-sn-glycero-3-phosphoethanolamine or LPE) and lysophosphatidic acid (LPA) and to a lesser extend lysophosphatidylcholine (LPC) and lysophosphatidylserine (LPS). Prefers oleoyl-CoA as the acyl donor. May be involved in chondrocyte differentiation. This chain is Membrane-bound glycerophospholipid O-acyltransferase 2, found in Rattus norvegicus (Rat).